A 324-amino-acid chain; its full sequence is tRNA dimethylallyltransferase (324 aa).

Position 17-24 (17-24 (GPTASGKT)) interacts with ATP. Substrate is bound at residue 19-24 (TASGKT). Interaction with substrate tRNA stretches follow at residues 42–45 (DSAL), 166–170 (QRIQR), 251–256 (RCVGYR), and 284–291 (KRQITWLR).

The protein belongs to the IPP transferase family. In terms of assembly, monomer. Mg(2+) is required as a cofactor.

The catalysed reaction is adenosine(37) in tRNA + dimethylallyl diphosphate = N(6)-dimethylallyladenosine(37) in tRNA + diphosphate. Functionally, catalyzes the transfer of a dimethylallyl group onto the adenine at position 37 in tRNAs that read codons beginning with uridine, leading to the formation of N6-(dimethylallyl)adenosine (i(6)A). This Burkholderia orbicola (strain MC0-3) protein is tRNA dimethylallyltransferase.